A 2598-amino-acid chain; its full sequence is Partially reducing polyketide synthase men1 (2598 aa).

A Ketosynthase family 3 (KS3) domain is found at 7–435 (SQSIAIVGLS…GSNAHAILDD (429 aa)). Residues Cys181, His316, and His358 each act as for beta-ketoacyl synthase activity in the active site. The span at 450–459 (GKSHHHHHQH) shows a compositional bias: basic residues. Disordered stretches follow at residues 450–490 (GKSH…NGTT) and 537–557 (AEKQQQQQQQQGGQGGADPEK). Residues 474–490 (VNGTSEVNGTSGVNGTT) show a composition bias toward low complexity. The region spanning 611-915 (YVFTGQGAQW…RGPVTQILQS (305 aa)) is the Malonyl-CoA:ACP transacylase (MAT) domain. Positions 1008–1151 (LGLIGAPMPN…GSVAVEFGAL (144 aa)) are N-terminal hotdog fold. Residues 1008 to 1325 (LGLIGAPMPN…CVEMPSASGM (318 aa)) form the PKS/mFAS DH domain. The tract at residues 1009–1323 (GLIGAPMPNF…LVCVEMPSAS (315 aa)) is dehydratase (DH) domain. Positions 1169 to 1325 (TISQEVDVFY…CVEMPSASGM (157 aa)) are C-terminal hotdog fold. Positions 1886–2197 (GMLNTLCFEI…ARSRQDKIVI (312 aa)) constitute an Enoyl reductase (ER) domain. One can recognise a Ketoreductase (KR) domain in the interval 2222 to 2399 (TYLIAGGLGG…AATIDLGIVK (178 aa)). The 78-residue stretch at 2510–2587 (EAARLVSAAV…AFASDLAKKG (78 aa)) folds into the Carrier domain. Ser2547 bears the O-(pantetheine 4'-phosphoryl)serine mark.

The cofactor is pantetheine 4'-phosphate.

Its pathway is secondary metabolite biosynthesis. Partially reducing polyketide synthase; part of the gene cluster that mediates the biosynthesis of menisporopsin A, a bioactive macrocyclic polylactone. The biosynthesis of menisporopsin A is performed by a reducing (man1) and a non-reducing (men2) polyketide synthase that catalyze the formation of each menisporopsin A subunits, while the esterification and cyclolactonization activities are probably peformed by the unusual thioesterase domain of men2. First, a reduced diketide intermediate, 3-hydroxybutyryl-S-ACP is produced by men1 and transferred to men2; this is followed by a second reduced diketide which is further elongated using 3 units of malonyl-coA to form a reduced pentaketide. The cyclization of this intermediate by the PT domain forms the second subunit, 2,4-dihydroxy-6-(2-hydroxy-n-propyl)benzoyl-S-ACP. The TE domain of men2 then esterifies the secondary hydroxyl group on the side chain of the second subunit with the acyl-TE of the first subunit to form the first ester intermediate. This process occurs iteratively to form a linear tetraester intermediate. The final subunit is formed by a similar process, except that an extra malonyl-CoA is required in an additional elongation step to form a reduced hexaketide intermediate, and the carbonyl group next to the secondary hydroxyl group is reduced by a trans-acting ketoreductase. Again, the PT domain catalyzes cyclization to form the largest subunit, 2,4-dihydroxy-6-(2,4-dihydroxy-n-pentyl) benzoyl-S-ACP. Then the linear pentaester intermediate is formed. In this step, if the intermediate transfer rate is slow, intra- molecular cyclization involving the secondary hydroxyl group of the pentaester intermediate may occur to form menisporopsin B. Alternatively, transfer of the pentaester intermediate to the TE domain would allow cyclolactonization to be catalyzed by the TE to form menisporopsin A. This Menisporopsis theobromae protein is Partially reducing polyketide synthase men1.